Consider the following 636-residue polypeptide: 1,4-alpha-glucan branching enzyme GlgB (636 aa).

The active-site Nucleophile is Asp309. The active-site Proton donor is Glu362.

Belongs to the glycosyl hydrolase 13 family. GlgB subfamily. In terms of assembly, monomer.

The enzyme catalyses Transfers a segment of a (1-&gt;4)-alpha-D-glucan chain to a primary hydroxy group in a similar glucan chain.. It participates in glycan biosynthesis; glycogen biosynthesis. Its function is as follows. Catalyzes the formation of the alpha-1,6-glucosidic linkages in glycogen by scission of a 1,4-alpha-linked oligosaccharide from growing alpha-1,4-glucan chains and the subsequent attachment of the oligosaccharide to the alpha-1,6 position. In Aromatoleum aromaticum (strain DSM 19018 / LMG 30748 / EbN1) (Azoarcus sp. (strain EbN1)), this protein is 1,4-alpha-glucan branching enzyme GlgB.